Reading from the N-terminus, the 172-residue chain is S-ribosylhomocysteine lyase (172 aa).

Residues His54, His58, and Cys128 each coordinate Fe cation.

This sequence belongs to the LuxS family. In terms of assembly, homodimer. Fe cation serves as cofactor.

It carries out the reaction S-(5-deoxy-D-ribos-5-yl)-L-homocysteine = (S)-4,5-dihydroxypentane-2,3-dione + L-homocysteine. Involved in the synthesis of autoinducer 2 (AI-2) which is secreted by bacteria and is used to communicate both the cell density and the metabolic potential of the environment. The regulation of gene expression in response to changes in cell density is called quorum sensing. Catalyzes the transformation of S-ribosylhomocysteine (RHC) to homocysteine (HC) and 4,5-dihydroxy-2,3-pentadione (DPD). This chain is S-ribosylhomocysteine lyase, found in Vibrio cholerae serotype O1 (strain ATCC 39541 / Classical Ogawa 395 / O395).